The chain runs to 42 residues: uncharacterized protein (42 aa).

This is an uncharacterized protein from Dictyostelium discoideum (Social amoeba).